A 648-amino-acid chain; its full sequence is RAF proto-oncogene serine/threonine-protein kinase (648 aa).

Residue S29 is modified to Phosphoserine; by MAPK1. S43 carries the phosphoserine modification. The 76-residue stretch at 56–131 folds into the RBD domain; it reads NTIRVFLPNK…IGEELQVDFL (76 aa). The Phorbol-ester/DAG-type zinc-finger motif lies at 138–184; the sequence is THNFARKTFLKLAFCDICQKFLLNGFRCQTCGYKFHEHCSTKVPTMC. Zn(2+) is bound by residues H139, C152, C155, C165, C168, H173, C176, and C184. The segment at 217–335 is disordered; that stretch reads MRESVSRMPA…EKNKIRPRGQ (119 aa). S233 is subject to Phosphoserine; by PKA. The span at 239–271 shows a compositional bias: polar residues; that stretch reads TFNTSSPSSEGSLSQRQRSTSTPNVHMVSTTLP. Phosphoserine occurs at positions 252 and 259. Position 268 is a phosphothreonine; by autocatalysis (T268). Residue T269 is modified to Phosphothreonine; by PKA. Basic and acidic residues predominate over residues 275 to 285; that stretch reads RMIEDAIRSHS. Positions 286-301 are enriched in low complexity; that stretch reads ESASPSALSSSPNNLS. Phosphoserine; by MAPK1 is present on residues S289, S296, and S301. Residues 331-349 are interaction with PEBP1/RKIP; the sequence is RPRGQRDSSYYWEIEASEV. S338 is modified (phosphoserine; by PAK1, PAK2, PAK3 and PAK5). S339 carries the phosphoserine; by PAK1, PAK2 and PAK3 modification. Y340 and Y341 each carry phosphotyrosine; by SRC. Residues 349 to 609 enclose the Protein kinase domain; that stretch reads VMLSTRIGSG…PQILSSIELL (261 aa). Residues 355 to 363 and K375 contribute to the ATP site; that span reads IGSGSFGTV. The active-site Proton acceptor is D468. S471 carries the post-translational modification Phosphoserine. T491 is modified (phosphothreonine). S494 carries the phosphoserine modification. Phosphoserine; by PKC is present on residues S497 and S499. R563 is modified (symmetric dimethylarginine; by PRMT5). A Phosphoserine modification is found at S621. Position 642 is a phosphoserine; by MAPK1 (S642).

It belongs to the protein kinase superfamily. TKL Ser/Thr protein kinase family. RAF subfamily. Monomer. Homodimer. Heterodimerizes with BRAF and this heterodimer possesses a highly increased kinase activity compared to the respective homodimers or monomers. Heterodimerization is mitogen-regulated and enhanced by 14-3-3 proteins. MAPK1/ERK2 activation can induce a negative feedback that promotes the dissociation of the heterodimer. Forms a multiprotein complex with Ras (M-Ras/MRAS), SHOC2 and protein phosphatase 1 (PPP1CA, PPP1CB and PPP1CC). Interacts with LZTR1. Interacts with Ras proteins; the interaction is antagonized by RIN1. Weakly interacts with RIT1. Interacts with STK3/MST2; the interaction inhibits its pro-apoptotic activity. Interacts (when phosphorylated at Ser-259) with YWHAZ (unphosphorylated at 'Thr-232'). Interacts with MAP3K5/ASF1 (via N-terminus) and this interaction inhibits the proapoptotic function of MAP3K5/ASK1. Interacts with PAK1 (via kinase domain). The phosphorylated form interacts with PIN1. The Ser-338 and Ser-339 phosphorylated form (by PAK1) interacts with BCL2. Interacts with PEBP1/RKIP and this interaction is enhanced if RAF1 is phosphorylated on residues Ser-338, Ser-339, Tyr-340 and Tyr-341. Interacts with ADCY2, ADCY5, ADCY6, DGKH, RCAN1/DSCR1, PPP1R12A, PKB/AKT1, PPP2CA, PPP2R1B, SPRY2, SPRY4, CNKSR1/CNK1, KSR2 and PHB/prohibitin. Interacts with ROCK2. Interacts (via N-terminus) with RGS14 (via RBD domains); the interaction mediates the formation of a ternary complex with BRAF, a ternary complex inhibited by GNAI1. Probably forms a complex composed of chaperones HSP90 and HSP70, co-chaperones CDC37, PPP5C, TSC1 and client protein TSC2, CDK4, AKT, RAF1 and NR3C1; this complex does not contain co-chaperones STIP1/HOP and PTGES3/p23. Interacts with MAP2K1/MEK1 and MAP2K2/MEK2. In its active form, interacts with PRMT5. Interacts with FAM83B; displaces 14-3-3 proteins from RAF1 and activates RAF1. Interacts with PDE8A; the interaction promotes RAF1 activity. Interacts with MFHAS1. Interacts with GLS. Interacts with YWHAZ. Interacts with NEK10 and MAP2K1; the interaction is direct with NEK10 and required for ERK1/2-signaling pathway activation in response to UV irradiation. Zn(2+) is required as a cofactor. In terms of processing, phosphorylation at Thr-269, Ser-338, Tyr-341, Thr-491 and Ser-494 results in its activation. Phosphorylation at Ser-29, Ser-43, Ser-289, Ser-296, Ser-301 and Ser-642 by MAPK1/ERK2 results in its inactivation. Phosphorylation at Ser-259 induces the interaction with YWHAZ and inactivates kinase activity. Dephosphorylation of Ser-259 by the SHOC2-MRAS-PP1c (SMP) complex consisting of SHOC2, GTP-bound M-Ras/MRAS and the catalytic subunit of protein phosphatase 1 (PPP1CA, PPP1CB or PPP1CC); this relieves inactivation and stimulates kinase activity. Phosphorylation at Ser-338 by PAK1 and PAK5 and Ser-339 by PAK1 is required for its mitochondrial localization. Phosphorylation at Ser-621 in response to growth factor treatment stabilizes the protein, possibly by preventing proteasomal degradation. Phosphorylation at Ser-289, Ser-296, Ser-301, Ser-338 and Ser-621 are somehow linked to the methylation potential of cells. Treatment of cells with HGF in the presence of the methylation inhibitor 5'-methylthioadenosine (MTA) results in increased phosphorylation at Ser-338 and Ser-621 and decreased phosphorylation at Ser-296, Ser-301 and Ser-338. Dephosphorylation at Ser-338 by PPP5C results in a decreased of activity. Methylated in response to EGF treatment. This modification leads to destabilization of the protein, possibly through proteasomal degradation.

The protein localises to the cytoplasm. Its subcellular location is the cell membrane. It is found in the mitochondrion. It localises to the nucleus. The enzyme catalyses L-seryl-[protein] + ATP = O-phospho-L-seryl-[protein] + ADP + H(+). It catalyses the reaction L-threonyl-[protein] + ATP = O-phospho-L-threonyl-[protein] + ADP + H(+). With respect to regulation, regulation is a highly complex process involving membrane recruitment, protein-protein interactions, dimerization, and phosphorylation/dephosphorylation events. Ras-GTP recruits RAF1 to the membrane, thereby promoting its activation. The inactive conformation of RAF1 is maintained by autoinhibitory interactions occurring between the N-terminal regulatory and the C-terminal catalytic domains and by the binding of a 14-3-3 protein that contacts two phosphorylation sites, Ser-259 and Ser-621. Upon mitogenic stimulation, Ras and PPP2R1A cooperate to release autoinhibition and the subsequent phosphorylation of activating sites: Ser-338, Tyr-341, Thr-491, and Ser-494, yields a fully active kinase. Through a negative feedback mechanism involving MAPK1/ERK2, RAF1 is phosphorylated on Ser-29, Ser-43, Ser-289, Ser-296, Ser-301 and Ser-642 by MAPK1/ERK2, which yields an inactive, desensitized kinase. The signaling-competent conformation of RAF1 is finally re-established by the coordinated action of PIN1, a prolyl isomerase that converts pSer and pThr residues from the cis to the trans conformation, which is preferentially recognized and dephosphorylated by PPP2R1A. Activated by homodimerization and heterodimerization (with BRAF). Also regulated through association with other proteins such as KSR2, CNKSR1/CNK1, PEBP1/RKIP, PHB/prohibitin and SPRY4. PEBP1/RKIP acts by dissociating RAF1 from its substrates MAP2K1/MEK1 and MAP2K2/MEK2. PHB/prohibitin facilitates the displacement of 14-3-3 from RAF1 by activated Ras, thereby promoting cell membrane localization and phosphorylation of RAF1 at the activating Ser-338. SPRY4 inhibits Ras-independent, but not Ras-dependent, activation of RAF1. CNKSR1/CNK1 regulates Src-mediated RAF1 activation. Functionally, serine/threonine-protein kinase that acts as a regulatory link between the membrane-associated Ras GTPases and the MAPK/ERK cascade, and this critical regulatory link functions as a switch determining cell fate decisions including proliferation, differentiation, apoptosis, survival and oncogenic transformation. RAF1 activation initiates a mitogen-activated protein kinase (MAPK) cascade that comprises a sequential phosphorylation of the dual-specific MAPK kinases (MAP2K1/MEK1 and MAP2K2/MEK2) and the extracellular signal-regulated kinases (MAPK3/ERK1 and MAPK1/ERK2). The phosphorylated form of RAF1 (on residues Ser-338 and Ser-339, by PAK1) phosphorylates BAD/Bcl2-antagonist of cell death at 'Ser-75'. Phosphorylates adenylyl cyclases: ADCY2, ADCY5 and ADCY6, resulting in their activation. Phosphorylates PPP1R12A resulting in inhibition of the phosphatase activity. Can promote NF-kB activation and inhibit signal transducers involved in motility (ROCK2), apoptosis (MAP3K5/ASK1 and STK3/MST2), proliferation and angiogenesis (RB1). Can protect cells from apoptosis also by translocating to the mitochondria where it binds BCL2 and displaces BAD/Bcl2-antagonist of cell death. Regulates Rho signaling and migration, and is required for normal wound healing. Plays a role in the oncogenic transformation of epithelial cells via repression of the TJ protein, occludin (OCLN) by inducing the up-regulation of a transcriptional repressor SNAI2/SLUG, which induces down-regulation of OCLN. Restricts caspase activation in response to selected stimuli, notably Fas stimulation, pathogen-mediated macrophage apoptosis, and erythroid differentiation. Phosphorylates TNNT2/cardiac muscle troponin T. The sequence is that of RAF proto-oncogene serine/threonine-protein kinase (Raf1) from Rattus norvegicus (Rat).